The sequence spans 249 residues: AA9 family lytic polysaccharide monooxygenase cel61B (249 aa).

A signal peptide spans 1-19; sequence MKSCAILAALGCLAGSVLG. His-20 provides a ligand contact to Cu(2+). N-linked (GlcNAc...) asparagine glycosylation occurs at Asn-25. 2 disulfide bridges follow: Cys-78–Cys-198 and Cys-120–Cys-124. A Cu(2+)-binding site is contributed by His-108. O2 is bound by residues His-184 and Gln-193. Tyr-195 is a Cu(2+) binding site.

This sequence belongs to the polysaccharide monooxygenase AA9 family. Monomer. It depends on Cu(2+) as a cofactor.

It localises to the secreted. The enzyme catalyses [(1-&gt;4)-beta-D-glucosyl]n+m + reduced acceptor + O2 = 4-dehydro-beta-D-glucosyl-[(1-&gt;4)-beta-D-glucosyl]n-1 + [(1-&gt;4)-beta-D-glucosyl]m + acceptor + H2O.. Its function is as follows. Lytic polysaccharide monooxygenase (LPMO) that depolymerizes crystalline and amorphous polysaccharides via the oxidation of scissile alpha- or beta-(1-4)-glycosidic bonds, yielding C1 or C4 oxidation products. Catalysis by LPMOs requires the reduction of the active-site copper from Cu(II) to Cu(I) by a reducing agent and H(2)O(2) or O(2) as a cosubstrate. The chain is AA9 family lytic polysaccharide monooxygenase cel61B from Hypocrea jecorina (strain QM6a) (Trichoderma reesei).